The chain runs to 319 residues: QSSTVTPNVVVAADGSGDYKTVSEAVAAAPEDSKTRYVIRIKAGVYRENVDVPKKKKNIMFLGDGRTSTIITASKNVQDGSTTFNSATVAAVGAGFLARDITFQNTAGAAKHQAVALRVGSDLSAFYRCDILAYQDSLYVHSNRQFFINCFIAGTVDFIFGNAAVVLQDCDIHARRPGSGQKNMVTAQGRTDPNQNTGIVIQKSRIGATSDLQPVQSSFPTYLGRPWKEYSRTVVMQSSITNVINPAGWFPWDGNFALDTLYYGEYQNTGAGAATSGRVTWKGFKVITSSTEAQGFTPGSFIAGGSWLKATTFPFSLGL.

Gln-1 is modified (pyrrolidone carboxylic acid). 2 residues coordinate substrate: Thr-83 and Gln-113. Residue Asp-136 is the Proton donor of the active site. The cysteines at positions 150 and 170 are disulfide-linked. The active-site Nucleophile is the Asp-157. Positions 225 and 227 each coordinate substrate.

Belongs to the pectinesterase family.

The protein resides in the secreted. It localises to the cell wall. The enzyme catalyses [(1-&gt;4)-alpha-D-galacturonosyl methyl ester](n) + n H2O = [(1-&gt;4)-alpha-D-galacturonosyl](n) + n methanol + n H(+). The protein operates within glycan metabolism; pectin degradation; 2-dehydro-3-deoxy-D-gluconate from pectin: step 1/5. Catalyzes the deesterification of methyl-esterified D-galactosiduronic acid units in pectic compounds. It participates in modulating cell wall during fruit ripening, cell wall extension during pollen germination, and in defense mechanisms against pathogens. In Daucus carota (Wild carrot), this protein is Pectinesterase.